Reading from the N-terminus, the 215-residue chain is Probable transaldolase (215 aa).

The active-site Schiff-base intermediate with substrate is Lys83.

This sequence belongs to the transaldolase family. Type 3B subfamily.

The protein localises to the cytoplasm. It carries out the reaction D-sedoheptulose 7-phosphate + D-glyceraldehyde 3-phosphate = D-erythrose 4-phosphate + beta-D-fructose 6-phosphate. It participates in carbohydrate degradation; pentose phosphate pathway; D-glyceraldehyde 3-phosphate and beta-D-fructose 6-phosphate from D-ribose 5-phosphate and D-xylulose 5-phosphate (non-oxidative stage): step 2/3. Functionally, transaldolase is important for the balance of metabolites in the pentose-phosphate pathway. The chain is Probable transaldolase from Streptococcus agalactiae serotype III (strain NEM316).